The sequence spans 445 residues: Methionine aminopeptidase 2-2 (445 aa).

Positions 1-92 (MAAQASEDLK…RVPISQLFPN (92 aa)) are disordered. The segment covering 18 to 33 (AGDSKAAAATAGQAEA) has biased composition (low complexity). Acidic residues predominate over residues 34–46 (GEAEDDSDDDEVD). Positions 47–58 (GNAAPEGAASGA) are enriched in low complexity. Residues 59–74 (AKKKKKRKPKKKKKGG) are compositionally biased toward basic residues. Histidine 198 provides a ligand contact to substrate. The a divalent metal cation site is built by aspartate 218, aspartate 229, and histidine 298. Histidine 306 contributes to the substrate binding site. A divalent metal cation is bound by residues glutamate 331 and glutamate 426.

Belongs to the peptidase M24A family. Methionine aminopeptidase eukaryotic type 2 subfamily. Co(2+) is required as a cofactor. It depends on Zn(2+) as a cofactor. Requires Mn(2+) as cofactor. Fe(2+) serves as cofactor.

It is found in the cytoplasm. The enzyme catalyses Release of N-terminal amino acids, preferentially methionine, from peptides and arylamides.. Functionally, cotranslationally removes the N-terminal methionine from nascent proteins. The N-terminal methionine is often cleaved when the second residue in the primary sequence is small and uncharged (Met-Ala-, Cys, Gly, Pro, Ser, Thr, or Val). This is Methionine aminopeptidase 2-2 from Aspergillus terreus (strain NIH 2624 / FGSC A1156).